The chain runs to 215 residues: Leucyl/phenylalanyl-tRNA--protein transferase (215 aa).

The protein belongs to the L/F-transferase family.

The protein localises to the cytoplasm. The enzyme catalyses N-terminal L-lysyl-[protein] + L-leucyl-tRNA(Leu) = N-terminal L-leucyl-L-lysyl-[protein] + tRNA(Leu) + H(+). It carries out the reaction N-terminal L-arginyl-[protein] + L-leucyl-tRNA(Leu) = N-terminal L-leucyl-L-arginyl-[protein] + tRNA(Leu) + H(+). The catalysed reaction is L-phenylalanyl-tRNA(Phe) + an N-terminal L-alpha-aminoacyl-[protein] = an N-terminal L-phenylalanyl-L-alpha-aminoacyl-[protein] + tRNA(Phe). Functions in the N-end rule pathway of protein degradation where it conjugates Leu, Phe and, less efficiently, Met from aminoacyl-tRNAs to the N-termini of proteins containing an N-terminal arginine or lysine. This is Leucyl/phenylalanyl-tRNA--protein transferase from Campylobacter jejuni (strain RM1221).